A 151-amino-acid chain; its full sequence is Protein A151R (151 aa).

Residues H102, C109, C132, and C135 each coordinate Zn(2+). Positions 131-135 (WCTKC) match the Thioredoxin WCTKC motif motif.

It belongs to the asfivirus A151R family. In terms of assembly, monomer. Homodimer. Interacts with protein B119L. Interacts with membrane protein E248R. Requires Zn(2+) as cofactor.

Functionally, may participate in a redox cascade for the formation of disulfide bonds in viral proteins. In African swine fever virus (strain Badajoz 1971 Vero-adapted) (Ba71V), this protein is Protein A151R.